The following is a 172-amino-acid chain: Adenine phosphoribosyltransferase (172 aa).

Belongs to the purine/pyrimidine phosphoribosyltransferase family. As to quaternary structure, homodimer.

Its subcellular location is the cytoplasm. It carries out the reaction AMP + diphosphate = 5-phospho-alpha-D-ribose 1-diphosphate + adenine. It functions in the pathway purine metabolism; AMP biosynthesis via salvage pathway; AMP from adenine: step 1/1. Functionally, catalyzes a salvage reaction resulting in the formation of AMP, that is energically less costly than de novo synthesis. This is Adenine phosphoribosyltransferase from Staphylococcus carnosus (strain TM300).